We begin with the raw amino-acid sequence, 149 residues long: Arginine repressor (149 aa).

This sequence belongs to the ArgR family.

The protein localises to the cytoplasm. It participates in amino-acid biosynthesis; L-arginine biosynthesis [regulation]. Its function is as follows. Regulates arginine biosynthesis genes. The chain is Arginine repressor from Listeria welshimeri serovar 6b (strain ATCC 35897 / DSM 20650 / CCUG 15529 / CIP 8149 / NCTC 11857 / SLCC 5334 / V8).